We begin with the raw amino-acid sequence, 289 residues long: ATP synthase subunit gamma, mitochondrial (289 aa).

Belongs to the ATPase gamma chain family. In terms of assembly, F-type ATPases have 2 components, CF(1) - the catalytic core - and CF(0) - the membrane proton channel. CF(1) has five subunits: alpha(3), beta(3), gamma(1), delta(1), epsilon(1). CF(0) has three main subunits: a, b and c.

The protein resides in the mitochondrion. It is found in the mitochondrion inner membrane. Mitochondrial membrane ATP synthase (F(1)F(0) ATP synthase or Complex V) produces ATP from ADP in the presence of a proton gradient across the membrane which is generated by electron transport complexes of the respiratory chain. F-type ATPases consist of two structural domains, F(1) - containing the extramembraneous catalytic core, and F(0) - containing the membrane proton channel, linked together by a central stalk and a peripheral stalk. During catalysis, ATP synthesis in the catalytic domain of F(1) is coupled via a rotary mechanism of the central stalk subunits to proton translocation. Part of the complex F(1) domain and the central stalk which is part of the complex rotary element. The gamma subunit protrudes into the catalytic domain formed of alpha(3)beta(3). Rotation of the central stalk against the surrounding alpha(3)beta(3) subunits leads to hydrolysis of ATP in three separate catalytic sites on the beta subunits. In Kluyveromyces lactis (strain ATCC 8585 / CBS 2359 / DSM 70799 / NBRC 1267 / NRRL Y-1140 / WM37) (Yeast), this protein is ATP synthase subunit gamma, mitochondrial (ATP3).